The chain runs to 568 residues: Glucose-6-phosphate isomerase, cytosolic (568 aa).

E360 acts as the Proton donor in catalysis. Catalysis depends on residues H391 and K516.

It belongs to the GPI family. As to quaternary structure, homodimer.

It is found in the cytoplasm. It carries out the reaction alpha-D-glucose 6-phosphate = beta-D-fructose 6-phosphate. It participates in carbohydrate degradation; glycolysis; D-glyceraldehyde 3-phosphate and glycerone phosphate from D-glucose: step 2/4. The protein is Glucose-6-phosphate isomerase, cytosolic (PGIC) of Oenothera sinuata var. hirsuta (Mexican evening primrose).